Reading from the N-terminus, the 359-residue chain is EGF-like domain containing protein 2 (359 aa).

The first 20 residues, 1–20 (MPPFISHFFLLSTFASLALC), serve as a signal peptide directing secretion. 2 EGF-like domains span residues 21–55 (SFYC…FNCG) and 61–93 (ISAA…PTCQ). 6 cysteine pairs are disulfide-bonded: cysteine 24-cysteine 37, cysteine 31-cysteine 43, cysteine 45-cysteine 54, cysteine 65-cysteine 75, cysteine 69-cysteine 81, and cysteine 83-cysteine 92.

In terms of tissue distribution, prismatic layer of shell (at protein level). Expressed primarily in the mantle with highest level in the mantle edge and lower level in the mantle pallium.

The protein localises to the secreted. This Margaritifera margaritifera (Freshwater pearl mussel) protein is EGF-like domain containing protein 2.